The chain runs to 459 residues: tRNA uridine(34) acetyltransferase (459 aa).

The tract at residues Met-1–Val-278 is radical S-adenosyl-L-methionine (rSAM). Residues Arg-6 to Pro-271 enclose the Radical SAM core domain. [4Fe-4S] cluster-binding residues include Cys-23, Cys-27, and Cys-30. Lys-77 is a binding site for acetyl-CoA. Residues Gln-308–Asp-459 form an N-acetyltransferase region. Zn(2+) is bound by residues Cys-310, Cys-312, and Cys-315. Residues Glu-386 to Val-389, Leu-409 to Arg-411, and Tyr-442 contribute to the acetyl-CoA site.

This sequence belongs to the ELP3 family. Homodimer. [4Fe-4S] cluster is required as a cofactor.

The catalysed reaction is uridine(34) in tRNA + acetyl-CoA + S-adenosyl-L-methionine + H2O = 5-(carboxymethyl)uridine(34) in tRNA + 5'-deoxyadenosine + L-methionine + CoA + 2 H(+). It functions in the pathway tRNA modification. TRNA uridine(34) acetyltransferase, which mediates formation of carboxymethyluridine in the wobble base at position 34 in tRNAs. The proposed mechanism is the following: (i) recruits S-adenosyl-L-methionine and cleaves it to generate a 5'-deoxyadenosine radical (5'-dA) in the radical S-adenosyl-L-methionine (rSAM) region, (ii) hydrolyzes acetyl-CoA in the N-acetyltransferase domain and (iii) an acetyl radical is formed by the products of the two domains and (iv) is transferred onto the C5 position of uridine(34) in the bound tRNA molecule. Does not show protein lysine acetyltransferase activity. The chain is tRNA uridine(34) acetyltransferase from Dehalococcoides mccartyi (strain CBDB1).